The chain runs to 150 residues: Nucleoside diphosphate kinase (150 aa).

Positions 9, 57, 85, 91, 102, and 112 each coordinate ATP. His-115 functions as the Pros-phosphohistidine intermediate in the catalytic mechanism.

The protein belongs to the NDK family. It depends on Mg(2+) as a cofactor.

The protein resides in the cytoplasm. It carries out the reaction a 2'-deoxyribonucleoside 5'-diphosphate + ATP = a 2'-deoxyribonucleoside 5'-triphosphate + ADP. It catalyses the reaction a ribonucleoside 5'-diphosphate + ATP = a ribonucleoside 5'-triphosphate + ADP. Its function is as follows. Major role in the synthesis of nucleoside triphosphates other than ATP. The ATP gamma phosphate is transferred to the NDP beta phosphate via a ping-pong mechanism, using a phosphorylated active-site intermediate. This chain is Nucleoside diphosphate kinase, found in Methanothermobacter thermautotrophicus (strain ATCC 29096 / DSM 1053 / JCM 10044 / NBRC 100330 / Delta H) (Methanobacterium thermoautotrophicum).